The sequence spans 457 residues: Multidrug resistance protein MdtK (457 aa).

Transmembrane regions (helical) follow at residues 11–31 (LLAL…MGFV), 53–73 (IWLP…PVIA), 93–113 (WLAG…GYII), 127–147 (AVGY…FQVA), 160–180 (GMVM…IFIY), 189–209 (GGVG…LAMV), 243–263 (LPIA…ALLV), 276–296 (IALN…AAVT), 314–334 (AART…IFTV), 350–370 (VVTL…SDSI), 387–407 (IFYI…YILA), and 418–438 (PAGF…MMML).

It belongs to the multi antimicrobial extrusion (MATE) (TC 2.A.66.1) family. MdtK subfamily.

Its subcellular location is the cell inner membrane. In terms of biological role, multidrug efflux pump that functions probably as a Na(+)/drug antiporter. The polypeptide is Multidrug resistance protein MdtK (Escherichia coli O17:K52:H18 (strain UMN026 / ExPEC)).